A 129-amino-acid polypeptide reads, in one-letter code: Small ribosomal subunit protein uS8 (129 aa).

The protein belongs to the universal ribosomal protein uS8 family. In terms of assembly, part of the 30S ribosomal subunit. Contacts proteins S5 and S12.

In terms of biological role, one of the primary rRNA binding proteins, it binds directly to 16S rRNA central domain where it helps coordinate assembly of the platform of the 30S subunit. In Bdellovibrio bacteriovorus (strain ATCC 15356 / DSM 50701 / NCIMB 9529 / HD100), this protein is Small ribosomal subunit protein uS8.